The sequence spans 371 residues: MSTNNSDIRVVVGMSGGVDSSVTAHILKEQGYDVIGIFMKNWDDTDEFGVCTATEDYDDVIRVANQIGIPYYAVNFEKEYWDKVFTYFLDEYKLGRTPNPDVMCNKEIKFKAFLEHAESLGADYVATGHYAQVKKVGDEIELLRGVDNNKDQTYFLNQLSQDQLKKVMFPLGAMEKTEVREIAKKAGLATADKKDSTGICFIGERNFKQFLSEYLPAQPGEMRTLDGEVLGKHDGLMYYTIGQRHGLGIGGDGEPWFVVGKDLKENVLFVEQGFHHETLYSDSLIATDISFTTNAEKPKTIECTAKFRYRQTDTKVTVHLREDGTAEVVFADPVRAITPGQAVVFYDGDVCLGGGTIDTVWKNGQKLDYVG.

Residues 13 to 20 (GMSGGVDS) and M39 each bind ATP. Residues 99 to 101 (NPD) form an interaction with target base in tRNA region. C104 acts as the Nucleophile in catalysis. Cysteines 104 and 200 form a disulfide. An ATP-binding site is contributed by G128. Positions 150 to 152 (KDQ) are interaction with tRNA. The active-site Cysteine persulfide intermediate is C200. Residues 308 to 309 (RY) are interaction with tRNA.

The protein belongs to the MnmA/TRMU family.

It localises to the cytoplasm. The catalysed reaction is S-sulfanyl-L-cysteinyl-[protein] + uridine(34) in tRNA + AH2 + ATP = 2-thiouridine(34) in tRNA + L-cysteinyl-[protein] + A + AMP + diphosphate + H(+). Its function is as follows. Catalyzes the 2-thiolation of uridine at the wobble position (U34) of tRNA, leading to the formation of s(2)U34. This Listeria monocytogenes serovar 1/2a (strain ATCC BAA-679 / EGD-e) protein is tRNA-specific 2-thiouridylase MnmA.